Reading from the N-terminus, the 276-residue chain is Expansin-like A3 (276 aa).

Residues 1 to 28 (MAVLLSILSSSFLLLLAASSSSTPRASA) form the signal peptide. One can recognise an Expansin-like EG45 domain in the interval 52 to 158 (GGGCGYGAMA…RRIPCDYKDK (107 aa)). N-linked (GlcNAc...) asparagine glycosylation is found at asparagine 115 and asparagine 159. In terms of domain architecture, Expansin-like CBD spans 172-255 (NNLVIKFLYQ…NWQPGQVYDT (84 aa)).

This sequence belongs to the expansin family. Expansin-like A subfamily.

The protein resides in the secreted. This is Expansin-like A3 (EXLA3) from Oryza sativa subsp. japonica (Rice).